The sequence spans 485 residues: Aspartyl/glutamyl-tRNA(Asn/Gln) amidotransferase subunit B (485 aa).

This sequence belongs to the GatB/GatE family. GatB subfamily. Heterotrimer of A, B and C subunits.

The catalysed reaction is L-glutamyl-tRNA(Gln) + L-glutamine + ATP + H2O = L-glutaminyl-tRNA(Gln) + L-glutamate + ADP + phosphate + H(+). It catalyses the reaction L-aspartyl-tRNA(Asn) + L-glutamine + ATP + H2O = L-asparaginyl-tRNA(Asn) + L-glutamate + ADP + phosphate + 2 H(+). In terms of biological role, allows the formation of correctly charged Asn-tRNA(Asn) or Gln-tRNA(Gln) through the transamidation of misacylated Asp-tRNA(Asn) or Glu-tRNA(Gln) in organisms which lack either or both of asparaginyl-tRNA or glutaminyl-tRNA synthetases. The reaction takes place in the presence of glutamine and ATP through an activated phospho-Asp-tRNA(Asn) or phospho-Glu-tRNA(Gln). The polypeptide is Aspartyl/glutamyl-tRNA(Asn/Gln) amidotransferase subunit B (Rhodospirillum rubrum (strain ATCC 11170 / ATH 1.1.1 / DSM 467 / LMG 4362 / NCIMB 8255 / S1)).